A 714-amino-acid chain; its full sequence is Stellatatriene synthase (714 aa).

Positions 1 to 325 (MEYKFSTVVD…RYNSSGSFSD (325 aa)) are stellata-2,6,19-trien synthase. 2 residues coordinate Mg(2+): aspartate 92 and aspartate 96. A DDXXD motif 1 motif is present at residues 92-96 (DDVTD). The NSE motif signature appears at 276-284 (YLKIVEEYK). A geranylgeranyl diphosphate synthase region spans residues 326-713 (HQLELMKNGV…LRLIMELLKT (388 aa)). The tract at residues 332–356 (KNGVPKDPASGSTNGTSNGTSNGTS) is disordered. Residues 341–356 (SGSTNGTSNGTSNGTS) show a composition bias toward low complexity. Residues lysine 434, arginine 437, and histidine 466 each contribute to the isopentenyl diphosphate site. Aspartate 473 and aspartate 477 together coordinate Mg(2+). The short motif at 473–477 (DDVED) is the DDXXD motif 2 element. Arginine 482 serves as a coordination point for dimethylallyl diphosphate. Arginine 483 is an isopentenyl diphosphate binding site. 6 residues coordinate dimethylallyl diphosphate: lysine 560, threonine 561, glutamine 596, asparagine 603, lysine 613, and lysine 623.

The protein in the N-terminal section; belongs to the terpene synthase family. In the C-terminal section; belongs to the FPP/GGPP synthase family. Hexamer.

The catalysed reaction is 4 isopentenyl diphosphate + dimethylallyl diphosphate = (2E,6E,10E,14E)-geranylfarnesyl diphosphate + 4 diphosphate. It catalyses the reaction (2E,6E,10E,14E)-geranylfarnesyl diphosphate = stellata-2,6,19-triene + diphosphate. The protein operates within secondary metabolite biosynthesis; terpenoid biosynthesis. In terms of biological role, multifunctional diterpene synthase; part of the gene cluster that mediates the biosynthesis of the sesterterpene stellatic acid. The first step in the pathway is performed by the stellatatriene synthase that possesses both prenyl transferase and terpene cyclase activity, converting isopentenyl diphosphate and dimethylallyl diphosphate into geranylgeranyl diphosphate (GGDP) and then converting GGDP into stellata-2,6,19-triene. The cytochrome P450 monooxygenase Stl-P450 then catalyzes three successive oxidation reactions on the C-20 methyl group to generate the carboxylic acid of stellatic acid. This chain is Stellatatriene synthase, found in Emericella variicolor (Aspergillus stellatus).